The primary structure comprises 162 residues: Heat shock protein beta-6 (162 aa).

Residues 1–72 (MEIRVPVQPS…PTAQVPTDPG (72 aa)) are involved in stabilization of the HSPB1:HSBP6 heterodimer. Position 16 is a phosphoserine (Ser16). An Isoglutamyl lysine isopeptide (Gln-Lys) (interchain with K-162) cross-link involves residue Gln31. Residues 56–162 (RAPSVALPTA…ASLPSPPAAK (107 aa)) enclose the sHSP domain. Deamidated glutamine is present on Gln66. Ser157 carries the phosphoserine modification. Lys162 participates in a covalent cross-link: Isoglutamyl lysine isopeptide (Lys-Gln) (interchain with Q-31).

The protein belongs to the small heat shock protein (HSP20) family. As to quaternary structure, homodimer. Small heat shock proteins form high molecular mass oligomers containing variable number of monomers; these oligomers display a very flexible quaternary structure easily exchanging their subunits. Heterooligomer with HSPB1; formed through oligomerization of HSPB1:HSBP6 dimers; subunit exchange leads to formation of at least two different heterooligomeric complexes, differing in variable quantities of HSPB1 and HSPB6 homodimers in addition to HSPB1:HSPB6 heterodimers. Heterooligomer with CRYAB; large heterooligomers consist of CRYAB homodimers and HSPB5:HSPB6 heterodimers but lacking HSPB6 homodimers. Interacts with BAG3. Interacts (phosphorylated) with YWHAZ. Interacts with PDE4A and PDE4D; required for maintenance of the non-phosphorylated state of HSPB6 under basal conditions. Interacts with KDR. Interacts with PRKD1. The N-terminus is blocked. Post-translationally, phosphorylated at Ser-16 by PKA and probably PKD1K; required to protect cardiomyocytes from apoptosis. Widely expressed. High expression in muscle tissues.

The protein localises to the cytoplasm. It is found in the nucleus. It localises to the secreted. In terms of biological role, small heat shock protein which functions as a molecular chaperone probably maintaining denatured proteins in a folding-competent state. Seems to have versatile functions in various biological processes. Plays a role in regulating muscle function such as smooth muscle vasorelaxation and cardiac myocyte contractility. May regulate myocardial angiogenesis implicating KDR. Overexpression mediates cardioprotection and angiogenesis after induced damage. Stabilizes monomeric YWHAZ thereby supporting YWHAZ chaperone-like activity. The protein is Heat shock protein beta-6 (Hspb6) of Rattus norvegicus (Rat).